We begin with the raw amino-acid sequence, 334 residues long: NAC domain-containing protein 66 (334 aa).

In terms of domain architecture, NAC spans 11-175 (VPPGFRFHPT…GWVVCRVFKK (165 aa)). The DNA-binding element occupies 111 to 181 (IGMRKTLVFY…VFKKNNLCKN (71 aa)).

Mostly expressed in anthers. Also present in pollen, base of siliques and inflorescence stems.

Its subcellular location is the nucleus. Its function is as follows. Transcription activator of genes involved in biosynthesis of secondary walls. Together with NST1, required for the secondary cell wall thickening of the anther endocethium, which is necessary for anther dehiscence. May also regulate the secondary cell wall lignification of other tissues such as tracheary elements. This Arabidopsis thaliana (Mouse-ear cress) protein is NAC domain-containing protein 66 (NAC066).